The primary structure comprises 107 residues: uncharacterized protein (107 aa).

Disordered regions lie at residues 51-75 (VQRS…TQSA) and 88-107 (NPTP…APEP). Over residues 63 to 75 (NGNQGSAIPTQSA) the composition is skewed to polar residues.

This is an uncharacterized protein from Fowl adenovirus A serotype 1 (strain CELO / Phelps) (FAdV-1).